We begin with the raw amino-acid sequence, 127 residues long: MDAGMDLYIGSNEERDRVKEKLKEILLKQLSNPNVSTLLIAAILLDNEGRANNLPFNYNEDPNYVYVDEVIGLAIANEIAGTKAIFNFRFYDAKKPGIIGELDRKGFMFLDDAIAGLLAGCMSKVFE.

This is an uncharacterized protein from Methanocaldococcus jannaschii (strain ATCC 43067 / DSM 2661 / JAL-1 / JCM 10045 / NBRC 100440) (Methanococcus jannaschii).